Reading from the N-terminus, the 348-residue chain is MRDTMLDERTKKVLYAVVESYIEKPEPVGSRYIMKKYGFDVCSATIRNIMSDLEDAGFLSQPHTSAGRVPTDKAYRFYVDYIFQSELFSQSLEIKRVIENLTKKLRKLRNNMNSLFLETTQSLSQATRYLGLALLPATEKTALHRVDFIKFKDDLVIAVVVNDKGIVKNKIIKVYPEITQKELNSLADFVNRNYHGKTIDEIRDDLIVRIKKEKIFWDRLISKILKMCQEALYFSREDVYVSGFYHIMHLPDFSDIEKLREVAKTIQDRHLLLKLFENISEDDEVKVIIGQENPVEEFRSFSIIASPYKEKDKSLGVIALVGPKRMNYQRAIMLVNAFARSLTRTLSD.

This sequence belongs to the HrcA family.

In terms of biological role, negative regulator of class I heat shock genes (grpE-dnaK-dnaJ and groELS operons). Prevents heat-shock induction of these operons. The sequence is that of Heat-inducible transcription repressor HrcA from Thermodesulfovibrio yellowstonii (strain ATCC 51303 / DSM 11347 / YP87).